The chain runs to 239 residues: Ribonuclease 3 (239 aa).

The region spanning 12–137 (REKVEAVIGY…LIAAIYLDAG (126 aa)) is the RNase III domain. Residue E50 participates in Mg(2+) binding. D54 is an active-site residue. Residues D123 and E126 each contribute to the Mg(2+) site. The active site involves E126. In terms of domain architecture, DRBM spans 162 to 231 (DAKTELQEWA…ATRLLEREGV (70 aa)).

It belongs to the ribonuclease III family. In terms of assembly, homodimer. The cofactor is Mg(2+).

Its subcellular location is the cytoplasm. The enzyme catalyses Endonucleolytic cleavage to 5'-phosphomonoester.. Functionally, digests double-stranded RNA. Involved in the processing of primary rRNA transcript to yield the immediate precursors to the large and small rRNAs (23S and 16S). Processes some mRNAs, and tRNAs when they are encoded in the rRNA operon. Processes pre-crRNA and tracrRNA of type II CRISPR loci if present in the organism. The sequence is that of Ribonuclease 3 from Allorhizobium ampelinum (strain ATCC BAA-846 / DSM 112012 / S4) (Agrobacterium vitis (strain S4)).